Consider the following 353-residue polypeptide: Protein Wnt-11b-1 (353 aa).

The N-terminal stretch at 1 to 22 (MAQIHHCVTLLLILCCSGLCGA) is a signal peptide. N-linked (GlcNAc...) asparagine glycans are attached at residues asparagine 31, asparagine 38, and asparagine 88. Disulfide bonds link cysteine 78-cysteine 89, cysteine 128-cysteine 136, cysteine 138-cysteine 155, cysteine 208-cysteine 222, and cysteine 210-cysteine 217. Serine 214 carries O-palmitoleoyl serine; by PORCN lipidation. A sulfotyrosine mark is found at tyrosine 274 and tyrosine 281. 6 cysteine pairs are disulfide-bonded: cysteine 282/cysteine 313, cysteine 298/cysteine 308, cysteine 312/cysteine 352, cysteine 328/cysteine 343, cysteine 330/cysteine 340, and cysteine 335/cysteine 336. Asparagine 299 carries an N-linked (GlcNAc...) asparagine glycan.

It belongs to the Wnt family. In terms of assembly, homodimer. Secreted homodimers form a complex with wnt5a homodimers; tyrosine sulfation of both wnt11 and wnt5a by tpst1 is required for this interaction. Interacts with the transmembrane receptor fzd7/fz7. Interacts with lrp6 and ryk. Interacts with tdgf1/frl1. Interacts weakly with frzb1 and strongly with frzb2/crescent. Interaction with frzb2/crescent antagonizes wnt11 function in the neuroectoderm, but enhances it in mesodermal tissue. Post-translationally, glycosylation is required for protein secretion. In terms of processing, palmitoleoylation is required for efficient binding to frizzled receptors. Depalmitoleoylation leads to Wnt signaling pathway inhibition.

The protein localises to the secreted. It is found in the extracellular space. The protein resides in the extracellular matrix. Ligand for the frizzled7 transmembrane receptor. Primarily acts via non-canonical Wnt pathways mediated by either Ca(2+) and PKC, or by JNK and dvl2/dsh. Depending on the cellular context, can also signal via the canonical Wnt pathway mediated by beta-catenin and dvl2/dsh. May also inhibit canonical Wnt signaling. Maternally initiates dorsal/ventral axis formation by a canonical route, which signals via lrp6. In a complex with wnt5a, activates the canonical and non-canonical processes involved in axis formation. In the non-canonical pathway, acts through fzd7/fz7 to induce phosphorylation of dvl2/dsh. Signals through a non-canonical Wnt pathway to regulate convergent extension movements during gastrulation. Interactions with the secreted Wnt antagonist sfrp5 to coordinate foregut development, acting via a non-canonical wnt pathway whereby sfrp5 restricts wnt11b activity to prevent inappropriate foregut formation. Mediates cardiogenesis via non-canonical Wnt signaling involving JNK-activation and PKC. Acts redundantly with wnt11/wnt11r during pronephros induction. This Xenopus tropicalis (Western clawed frog) protein is Protein Wnt-11b-1.